We begin with the raw amino-acid sequence, 70 residues long: Large ribosomal subunit protein bL31 (70 aa).

Residues C16, C18, C37, and C40 each contribute to the Zn(2+) site.

Belongs to the bacterial ribosomal protein bL31 family. Type A subfamily. In terms of assembly, part of the 50S ribosomal subunit. Zn(2+) is required as a cofactor.

Functionally, binds the 23S rRNA. The chain is Large ribosomal subunit protein bL31 from Shewanella halifaxensis (strain HAW-EB4).